Consider the following 210-residue polypeptide: Cytochrome c biogenesis ATP-binding export protein CcmA (210 aa).

Residues 3–209 enclose the ABC transporter domain; it reads LTVTNLACAR…PADDPFAGVT (207 aa). 35–42 provides a ligand contact to ATP; that stretch reads GPNGIGKT.

It belongs to the ABC transporter superfamily. CcmA exporter (TC 3.A.1.107) family. The complex is composed of two ATP-binding proteins (CcmA) and two transmembrane proteins (CcmB).

The protein resides in the cell inner membrane. It carries out the reaction heme b(in) + ATP + H2O = heme b(out) + ADP + phosphate + H(+). In terms of biological role, part of the ABC transporter complex CcmAB involved in the biogenesis of c-type cytochromes; once thought to export heme, this seems not to be the case, but its exact role is uncertain. Responsible for energy coupling to the transport system. This chain is Cytochrome c biogenesis ATP-binding export protein CcmA, found in Cereibacter sphaeroides (strain ATCC 17023 / DSM 158 / JCM 6121 / CCUG 31486 / LMG 2827 / NBRC 12203 / NCIMB 8253 / ATH 2.4.1.) (Rhodobacter sphaeroides).